The primary structure comprises 225 residues: Uracil-DNA glycosylase (225 aa).

The Proton acceptor role is filled by Asp-64.

It belongs to the uracil-DNA glycosylase (UDG) superfamily. UNG family.

It localises to the cytoplasm. It catalyses the reaction Hydrolyzes single-stranded DNA or mismatched double-stranded DNA and polynucleotides, releasing free uracil.. Excises uracil residues from the DNA which can arise as a result of misincorporation of dUMP residues by DNA polymerase or due to deamination of cytosine. The sequence is that of Uracil-DNA glycosylase from Agathobacter rectalis (strain ATCC 33656 / DSM 3377 / JCM 17463 / KCTC 5835 / VPI 0990) (Eubacterium rectale).